Here is a 338-residue protein sequence, read N- to C-terminus: Ketol-acid reductoisomerase (NADP(+)) (338 aa).

A KARI N-terminal Rossmann domain is found at M1–T181. NADP(+) is bound by residues Y24–Q27, R47, and S52. Residue H107 is part of the active site. Residue G133 coordinates NADP(+). One can recognise a KARI C-terminal knotted domain in the interval N182–I327. D190, E194, E226, and E230 together coordinate Mg(2+). Residue S251 coordinates substrate.

The protein belongs to the ketol-acid reductoisomerase family. The cofactor is Mg(2+).

The catalysed reaction is (2R)-2,3-dihydroxy-3-methylbutanoate + NADP(+) = (2S)-2-acetolactate + NADPH + H(+). It carries out the reaction (2R,3R)-2,3-dihydroxy-3-methylpentanoate + NADP(+) = (S)-2-ethyl-2-hydroxy-3-oxobutanoate + NADPH + H(+). It functions in the pathway amino-acid biosynthesis; L-isoleucine biosynthesis; L-isoleucine from 2-oxobutanoate: step 2/4. It participates in amino-acid biosynthesis; L-valine biosynthesis; L-valine from pyruvate: step 2/4. Its function is as follows. Involved in the biosynthesis of branched-chain amino acids (BCAA). Catalyzes an alkyl-migration followed by a ketol-acid reduction of (S)-2-acetolactate (S2AL) to yield (R)-2,3-dihydroxy-isovalerate. In the isomerase reaction, S2AL is rearranged via a Mg-dependent methyl migration to produce 3-hydroxy-3-methyl-2-ketobutyrate (HMKB). In the reductase reaction, this 2-ketoacid undergoes a metal-dependent reduction by NADPH to yield (R)-2,3-dihydroxy-isovalerate. The polypeptide is Ketol-acid reductoisomerase (NADP(+)) (Bordetella bronchiseptica (strain ATCC BAA-588 / NCTC 13252 / RB50) (Alcaligenes bronchisepticus)).